Consider the following 688-residue polypeptide: Two-component response regulator ORR23 (688 aa).

Residues 25–140 enclose the Response regulatory domain; that stretch reads RVLAVDDDPV…ELRNIWQHVI (116 aa). Aspartate 76 bears the 4-aspartylphosphate mark. The interval 161–212 is disordered; sequence PPNADSDHVHGHVTCGSPDQSGRPSKKRKEYCSEEEDEGEVNTQDIDDPSAP. Positions 193–208 are enriched in acidic residues; that stretch reads SEEEDEGEVNTQDIDD. Positions 211 to 270 form a DNA-binding region, myb-like GARP; it reads APKKPRVVWSVELHRKFVAAVNQLGIDKAVPKRILELMNVEKLTRENVASHLQKYRLYLK.

It belongs to the ARR family. Type-B subfamily. Post-translationally, two-component system major event consists of a His-to-Asp phosphorelay between a sensor histidine kinase (HK) and a response regulator (RR). In plants, the His-to-Asp phosphorelay involves an additional intermediate named Histidine-containing phosphotransfer protein (HPt). This multistep phosphorelay consists of a His-Asp-His-Asp sequential transfer of a phosphate group between first a His and an Asp of the HK protein, followed by the transfer to a conserved His of the HPt protein and finally the transfer to an Asp in the receiver domain of the RR protein.

Its subcellular location is the nucleus. Its function is as follows. Transcriptional activator that binds specific DNA sequence. Functions as a response regulator involved in His-to-Asp phosphorelay signal transduction system. Phosphorylation of the Asp residue in the receiver domain activates the ability of the protein to promote the transcription of target genes. May directly activate some type-A response regulators in response to cytokinins. The protein is Two-component response regulator ORR23 of Oryza sativa subsp. indica (Rice).